Here is a 72-residue protein sequence, read N- to C-terminus: Translation initiation factor IF-1 (72 aa).

The 72-residue stretch at 1-72 (MAKQSAIEKD…SKGRIAFRYK (72 aa)) folds into the S1-like domain.

This sequence belongs to the IF-1 family. Component of the 30S ribosomal translation pre-initiation complex which assembles on the 30S ribosome in the order IF-2 and IF-3, IF-1 and N-formylmethionyl-tRNA(fMet); mRNA recruitment can occur at any time during PIC assembly.

It is found in the cytoplasm. In terms of biological role, one of the essential components for the initiation of protein synthesis. Stabilizes the binding of IF-2 and IF-3 on the 30S subunit to which N-formylmethionyl-tRNA(fMet) subsequently binds. Helps modulate mRNA selection, yielding the 30S pre-initiation complex (PIC). Upon addition of the 50S ribosomal subunit IF-1, IF-2 and IF-3 are released leaving the mature 70S translation initiation complex. This is Translation initiation factor IF-1 from Parabacteroides distasonis (strain ATCC 8503 / DSM 20701 / CIP 104284 / JCM 5825 / NCTC 11152).